We begin with the raw amino-acid sequence, 180 residues long: Orotate phosphoribosyltransferase (180 aa).

Residues Arg95, Lys96, Lys99, and 121 to 129 contribute to the 5-phospho-alpha-D-ribose 1-diphosphate site; that span reads EDVTTTGGS. Orotate contacts are provided by Thr125 and Arg153.

Belongs to the purine/pyrimidine phosphoribosyltransferase family. PyrE subfamily. Homodimer. Mg(2+) is required as a cofactor.

It carries out the reaction orotidine 5'-phosphate + diphosphate = orotate + 5-phospho-alpha-D-ribose 1-diphosphate. The protein operates within pyrimidine metabolism; UMP biosynthesis via de novo pathway; UMP from orotate: step 1/2. Its function is as follows. Catalyzes the transfer of a ribosyl phosphate group from 5-phosphoribose 1-diphosphate to orotate, leading to the formation of orotidine monophosphate (OMP). This Methanothermobacter thermautotrophicus (strain ATCC 29096 / DSM 1053 / JCM 10044 / NBRC 100330 / Delta H) (Methanobacterium thermoautotrophicum) protein is Orotate phosphoribosyltransferase.